We begin with the raw amino-acid sequence, 245 residues long: 14-3-3 protein theta (245 aa).

The residue at position 1 (methionine 1) is an N-acetylmethionine. Lysine 3 is subject to N6-acetyllysine. Position 49 is an N6-acetyllysine; alternate (lysine 49). Lysine 49 participates in a covalent cross-link: Glycyl lysine isopeptide (Lys-Gly) (interchain with G-Cter in SUMO2); alternate. Lysine 68 is modified (N6-acetyllysine). Residue tyrosine 82 is modified to 3'-nitrotyrosine. At serine 92 the chain carries Phosphoserine. Tyrosine 104 is subject to 3'-nitrotyrosine. Lysine 115 is modified (N6-acetyllysine). Residue serine 232 is modified to Phosphoserine; by CK1.

Belongs to the 14-3-3 family. In terms of assembly, homodimer. Interacts with CDK16. Interacts with RGS7 (phosphorylated form). Interacts with SSH1. Interacts with CDKN1B ('Thr-198' phosphorylated form); the interaction translocates CDKN1B to the cytoplasm. Interacts with GAB2. Interacts with the 'Ser-241' phosphorylated form of PDPK1. Interacts with the 'Thr-369' phosphorylated form of DAPK2. Interacts with PI4KB, TBC1D22A and TBC1D22B. Interacts with SLITRK1. Interacts with RIPOR2. Interacts with INAVA; the interaction increases upon PRR (pattern recognition receptor) stimulation and is required for cellular signaling pathway activation and cytokine secretion. Interacts with MARK2, MARK3 and MARK4. Interacts with MEFV.

The protein localises to the cytoplasm. Adapter protein implicated in the regulation of a large spectrum of both general and specialized signaling pathways. Binds to a large number of partners, usually by recognition of a phosphoserine or phosphothreonine motif. Binding generally results in the modulation of the activity of the binding partner. Negatively regulates the kinase activity of PDPK1. In Bos taurus (Bovine), this protein is 14-3-3 protein theta (YWHAQ).